Consider the following 59-residue polypeptide: Large ribosomal subunit protein uL30 (59 aa).

The protein belongs to the universal ribosomal protein uL30 family. In terms of assembly, part of the 50S ribosomal subunit.

This chain is Large ribosomal subunit protein uL30, found in Staphylococcus aureus (strain JH1).